A 186-amino-acid polypeptide reads, in one-letter code: Peptidyl-tRNA hydrolase (186 aa).

Tyrosine 14 lines the tRNA pocket. Histidine 19 acts as the Proton acceptor in catalysis. Positions 64, 66, and 112 each coordinate tRNA.

Belongs to the PTH family. Monomer.

Its subcellular location is the cytoplasm. The catalysed reaction is an N-acyl-L-alpha-aminoacyl-tRNA + H2O = an N-acyl-L-amino acid + a tRNA + H(+). Its function is as follows. Hydrolyzes ribosome-free peptidyl-tRNAs (with 1 or more amino acids incorporated), which drop off the ribosome during protein synthesis, or as a result of ribosome stalling. In terms of biological role, catalyzes the release of premature peptidyl moieties from peptidyl-tRNA molecules trapped in stalled 50S ribosomal subunits, and thus maintains levels of free tRNAs and 50S ribosomes. The polypeptide is Peptidyl-tRNA hydrolase (Bacillus anthracis).